The primary structure comprises 78 residues: Large ribosomal subunit protein bL28 (78 aa).

It belongs to the bacterial ribosomal protein bL28 family.

The chain is Large ribosomal subunit protein bL28 from Thermosynechococcus vestitus (strain NIES-2133 / IAM M-273 / BP-1).